Reading from the N-terminus, the 535-residue chain is Ribonuclease Y (535 aa).

The chain crosses the membrane as a helical span at residues I4 to M24. Residues T107–E145 form a disordered region. Residues T225–L285 enclose the KH domain. Residues V351–A444 form the HD domain.

It belongs to the RNase Y family.

It is found in the cell membrane. Functionally, endoribonuclease that initiates mRNA decay. The polypeptide is Ribonuclease Y (Streptococcus agalactiae serotype Ia (strain ATCC 27591 / A909 / CDC SS700)).